A 94-amino-acid polypeptide reads, in one-letter code: UPF0381 protein YfcZ (94 aa).

This sequence belongs to the UPF0381 family.

In Escherichia coli O6:H1 (strain CFT073 / ATCC 700928 / UPEC), this protein is UPF0381 protein YfcZ (yfcZ).